Consider the following 416-residue polypeptide: GTPase Obg (416 aa).

Residues 1 to 157 (MFQDVLVITV…RRLRLELMLI (157 aa)) enclose the Obg domain. Disordered regions lie at residues 25–44 (EKFV…GGSV) and 62–82 (TYKA…RGGE). The span at 32–42 (GPDGGDGGRGG) shows a compositional bias: gly residues. The segment covering 63–72 (YKAEDGEHGR) has biased composition (basic and acidic residues). Residues 158–324 (ADVGLVGYPN…LKEALHALVR (167 aa)) form the OBG-type G domain. Residues 164 to 171 (GYPNAGKS), 189 to 193 (FTTLS), 211 to 214 (DIPG), 277 to 280 (NKVD), and 305 to 307 (SAL) each bind GTP. Ser171 and Thr191 together coordinate Mg(2+). The OCT domain occupies 336–414 (PRKEVQAGVE…IGGLEFEYIP (79 aa)).

Belongs to the TRAFAC class OBG-HflX-like GTPase superfamily. OBG GTPase family. Monomer. It depends on Mg(2+) as a cofactor.

It is found in the cytoplasm. Functionally, an essential GTPase which binds GTP, GDP and possibly (p)ppGpp with moderate affinity, with high nucleotide exchange rates and a fairly low GTP hydrolysis rate. Plays a role in control of the cell cycle, stress response, ribosome biogenesis and in those bacteria that undergo differentiation, in morphogenesis control. The protein is GTPase Obg of Thermus thermophilus (strain ATCC 27634 / DSM 579 / HB8).